Consider the following 561-residue polypeptide: uncharacterized protein (561 aa).

Disordered stretches follow at residues 20-42 (IQEQ…GCSP) and 82-283 (QIGS…STPF). A compositionally biased stretch (basic and acidic residues) spans 103 to 131 (DKISEDTDQERVVVCESLENKSSSKDKSP). Basic residues-rich tracts occupy residues 135-156 (RSPK…KSSK) and 165-185 (KSSK…KRYR). Basic and acidic residues-rich tracts occupy residues 192–203 (SLSRDRSSSRDR), 211–247 (YSRD…DRSP), and 259–272 (PLRD…RSVS).

It belongs to the mimivirus L41 family.

This is an uncharacterized protein from Acanthamoeba polyphaga (Amoeba).